Consider the following 45-residue polypeptide: Large ribosomal subunit protein bL34 (45 aa).

Belongs to the bacterial ribosomal protein bL34 family.

This is Large ribosomal subunit protein bL34 from Leifsonia xyli subsp. xyli (strain CTCB07).